A 249-amino-acid chain; its full sequence is Exosome complex component Rrp41 (249 aa).

The protein belongs to the RNase PH family. Rrp41 subfamily. As to quaternary structure, component of the archaeal exosome complex. Forms a hexameric ring-like arrangement composed of 3 Rrp41-Rrp42 heterodimers. The hexameric ring associates with a trimer of Rrp4 and/or Csl4 subunits.

It localises to the cytoplasm. Its function is as follows. Catalytic component of the exosome, which is a complex involved in RNA degradation. Has 3'-&gt;5' exoribonuclease activity. Can also synthesize heteromeric RNA-tails. The polypeptide is Exosome complex component Rrp41 (Thermococcus onnurineus (strain NA1)).